The primary structure comprises 558 residues: Glucose-6-phosphate isomerase (558 aa).

Position 2 is an N-acetylalanine (alanine 2). The residue at position 12 (lysine 12) is an N6-acetyllysine. Position 34 is an N6-(2-hydroxyisobutyryl)lysine (lysine 34). Serine 107 is subject to Phosphoserine. Threonine 109 bears the Phosphothreonine mark. Lysine 142 is modified (N6-acetyllysine). Residue 159–160 (GS) participates in D-glucose 6-phosphate binding. At serine 185 the chain carries Phosphoserine; by CK2. 210–215 (SKTFTT) serves as a coordination point for D-glucose 6-phosphate. Threonine 250 is subject to Phosphothreonine. Residues glutamine 354, glutamate 358, and histidine 389 each coordinate D-glucose 6-phosphate. Residue glutamate 358 is the Proton donor of the active site. Histidine 389 is a catalytic residue. At lysine 454 the chain carries N6-acetyllysine; alternate. Position 454 is an N6-malonyllysine; alternate (lysine 454). At lysine 454 the chain carries N6-succinyllysine; alternate. Position 455 is a phosphoserine (serine 455). Lysine 519 contributes to the D-glucose 6-phosphate binding site. Lysine 519 is a catalytic residue.

The protein belongs to the GPI family. Homodimer; in the catalytically active form. Monomer in the secreted form. Post-translationally, phosphorylation at Ser-185 by CK2 has been shown to decrease enzymatic activity and may contribute to secretion by a non-classical secretory pathway. In terms of processing, ISGylated.

The protein localises to the cytoplasm. It localises to the secreted. The enzyme catalyses alpha-D-glucose 6-phosphate = beta-D-fructose 6-phosphate. It functions in the pathway carbohydrate degradation; glycolysis; D-glyceraldehyde 3-phosphate and glycerone phosphate from D-glucose: step 2/4. Its function is as follows. In the cytoplasm, catalyzes the conversion of glucose-6-phosphate to fructose-6-phosphate, the second step in glycolysis, and the reverse reaction during gluconeogenesis. Besides it's role as a glycolytic enzyme, also acts as a secreted cytokine: acts as an angiogenic factor (AMF) that stimulates endothelial cell motility. Acts as a neurotrophic factor, neuroleukin, for spinal and sensory neurons. It is secreted by lectin-stimulated T-cells and induces immunoglobulin secretion. In Pongo abelii (Sumatran orangutan), this protein is Glucose-6-phosphate isomerase.